Reading from the N-terminus, the 145-residue chain is METIFDYNQIKQIIPHRQPFLLIDRVVEYEEGKRCVGLKQVSGNEPFFQGHFPDYAVMPGVLITEALAQTGAVAMLNSEENKGKIALFAGIDKCRFKKQVTPGDTLMLEVEITKIKGPIGKGTAKATVDGQLACSCELTFAIQNA.

H51 is a catalytic residue.

This sequence belongs to the thioester dehydratase family. FabZ subfamily.

It is found in the cytoplasm. The enzyme catalyses a (3R)-hydroxyacyl-[ACP] = a (2E)-enoyl-[ACP] + H2O. Functionally, involved in unsaturated fatty acids biosynthesis. Catalyzes the dehydration of short chain beta-hydroxyacyl-ACPs and long chain saturated and unsaturated beta-hydroxyacyl-ACPs. This Staphylococcus haemolyticus (strain JCSC1435) protein is 3-hydroxyacyl-[acyl-carrier-protein] dehydratase FabZ.